Consider the following 647-residue polypeptide: LIM domain kinase 1 (647 aa).

LIM zinc-binding domains lie at 25 to 75 (CASC…CKKD) and 84 to 137 (CHGC…CGQC). One can recognise a PDZ domain in the interval 165 to 258 (LVSIPASAHG…LLQLTLEHDP (94 aa)). S210 is modified (phosphoserine). At T229 the chain carries Phosphothreonine. Residues 256 to 316 (HDPHDSLGHG…SLVSPASQRK (61 aa)) form a disordered region. The span at 278 to 289 (HTPSGQAGSSAR) shows a compositional bias: polar residues. Residues S298, S302, S307, and S310 each carry the phosphoserine modification. S323 bears the Phosphoserine; by MAPKAPK2 mark. At S337 the chain carries Phosphoserine. The region spanning 339 to 604 (LIHGEVLGKG…PSFVKLEQWL (266 aa)) is the Protein kinase domain. Residues 345–353 (LGKGCFGQA) and K368 contribute to the ATP site. D460 is a catalytic residue. T508 bears the Phosphothreonine; by ROCK1 and PAK1 mark.

The protein belongs to the protein kinase superfamily. TKL Ser/Thr protein kinase family. In terms of assembly, interacts (via LIM domain) with the cytoplasmic domain of NRG1. Interacts with NISCH. Interacts with RLIM and RNF6. Self-associates to form homodimers. Interacts with HSP90AA1; this interaction promotes LIMK1 dimerization and subsequent transphosphorylation. Interacts with CDKN1C. Interacts with SSH1. Interacts with ROCK1. Interacts (via LIM zinc-binding domains) with FAM89B/LRAP25 (via LRR repeat). Forms a tripartite complex with CDC42BPA, CDC42BPB and FAM89B/LRAP25. Autophosphorylated. Phosphorylated on Thr-508 by ROCK1 and PAK1, resulting in activation. Phosphorylated by PAK4 which increases the ability of LIMK1 to phosphorylate cofilin. Phosphorylated at Ser-323 by MAPKAPK2 during activation of VEGFA-induced signaling, which results in activation of LIMK1 and promotion of actin reorganization, cell migration, and tubule formation of endothelial cells. Dephosphorylated and inactivated by SSH1. Phosphorylated by CDC42BP. In terms of processing, ubiquitinated. 'Lys-48'-linked polyubiquitination by RNF6 leads to proteasomal degradation through the 26S proteasome, modulating LIMK1 levels in the growth cone and its effect on axonal outgrowth. Also polyubiquitinated by RLIM.

It is found in the cytoplasm. Its subcellular location is the nucleus. The protein localises to the cytoskeleton. The protein resides in the cell projection. It localises to the lamellipodium. The enzyme catalyses L-seryl-[protein] + ATP = O-phospho-L-seryl-[protein] + ADP + H(+). It catalyses the reaction L-threonyl-[protein] + ATP = O-phospho-L-threonyl-[protein] + ADP + H(+). Its function is as follows. Serine/threonine-protein kinase that plays an essential role in the regulation of actin filament dynamics. Acts downstream of several Rho family GTPase signal transduction pathways. Activated by upstream kinases including ROCK1, PAK1 and PAK4, which phosphorylate LIMK1 on a threonine residue located in its activation loop. LIMK1 subsequently phosphorylates and inactivates the actin binding/depolymerizing factors cofilin-1/CFL1, cofilin-2/CFL2 and destrin/DSTN, thereby preventing the cleavage of filamentous actin (F-actin), and stabilizing the actin cytoskeleton. In this way LIMK1 regulates several actin-dependent biological processes including cell motility, cell cycle progression, and differentiation. Phosphorylates TPPP on serine residues, thereby promoting microtubule disassembly. Stimulates axonal outgrowth and may be involved in brain development. The sequence is that of LIM domain kinase 1 (Limk1) from Rattus norvegicus (Rat).